The sequence spans 725 residues: Probable dipeptidyl-peptidase 5 (725 aa).

Positions 1–18 are cleaved as a signal peptide; the sequence is MGALRWLSIAATASTALA. Residues Asn75, Asn96, Asn153, Asn258, Asn383, and Asn453 are each glycosylated (N-linked (GlcNAc...) asparagine). Ser563 acts as the Charge relay system in catalysis. An N-linked (GlcNAc...) asparagine glycan is attached at Asn610. Catalysis depends on charge relay system residues Asp646 and His678.

This sequence belongs to the peptidase S9C family.

It is found in the secreted. Functionally, extracellular dipeptidyl-peptidase which removes N-terminal dipeptides sequentially from polypeptides having unsubstituted N-termini. In Aspergillus flavus (strain ATCC 200026 / FGSC A1120 / IAM 13836 / NRRL 3357 / JCM 12722 / SRRC 167), this protein is Probable dipeptidyl-peptidase 5 (dpp5).